The following is a 243-amino-acid chain: Orotidine 5'-phosphate decarboxylase (243 aa).

Residues D19, K41, 69–78 (DLKFFDIPAT), T124, R185, Q194, G214, and R215 each bind substrate. K71 serves as the catalytic Proton donor.

The protein belongs to the OMP decarboxylase family. Type 1 subfamily. As to quaternary structure, homodimer.

It carries out the reaction orotidine 5'-phosphate + H(+) = UMP + CO2. Its pathway is pyrimidine metabolism; UMP biosynthesis via de novo pathway; UMP from orotate: step 2/2. Functionally, catalyzes the decarboxylation of orotidine 5'-monophosphate (OMP) to uridine 5'-monophosphate (UMP). This Xanthomonas oryzae pv. oryzae (strain MAFF 311018) protein is Orotidine 5'-phosphate decarboxylase.